The primary structure comprises 571 residues: Polypeptide N-acetylgalactosaminyltransferase 2 (571 aa).

The Cytoplasmic segment spans residues 1 to 6; it reads MRRRSR. The chain crosses the membrane as a helical; Signal-anchor for type II membrane protein span at residues 7-24; that stretch reads MLLCFAFLWVLGIAYYMY. Over 25 to 571 the chain is Lumenal; the sequence is SGGGSALAGG…QWKFTLNLQQ (547 aa). O-linked (Xyl...) (chondroitin sulfate) serine glycosylation is present at S29. Residues 53–66 show a composition bias toward basic and acidic residues; that stretch reads KKDLHHSNGEEKAQ. The disordered stretch occupies residues 53–74; it reads KKDLHHSNGEEKAQSMETLPPG. Cystine bridges form between C126-C354, C345-C423, C456-C473, and C496-C513. The catalytic subdomain A stretch occupies residues 135–240; the sequence is LPATSVVITF…EHWLEPLLER (106 aa). Residues T143, D176, and R201 each coordinate substrate. D224 contributes to the Mn(2+) binding site. S225 contacts substrate. H226 is a Mn(2+) binding site. Positions 300-362 are catalytic subdomain B; the sequence is PIKTPMIAGG…PCSRVGHVFR (63 aa). W331 is a binding site for substrate. Residue H359 coordinates Mn(2+). 3 residues coordinate substrate: R362, H365, and Y367. The Ricin B-type lectin domain maps to 443 to 566; that stretch reads QDIAFGALQQ…PALSQQWKFT (124 aa). Phosphoserine is present on S536. A disulfide bridge connects residues C539 and C555.

This sequence belongs to the glycosyltransferase 2 family. GalNAc-T subfamily. Requires Mn(2+) as cofactor. In terms of tissue distribution, detected in urine (at protein level). Widely expressed.

It localises to the golgi apparatus. The protein resides in the golgi stack membrane. Its subcellular location is the secreted. It carries out the reaction L-seryl-[protein] + UDP-N-acetyl-alpha-D-galactosamine = a 3-O-[N-acetyl-alpha-D-galactosaminyl]-L-seryl-[protein] + UDP + H(+). It catalyses the reaction L-threonyl-[protein] + UDP-N-acetyl-alpha-D-galactosamine = a 3-O-[N-acetyl-alpha-D-galactosaminyl]-L-threonyl-[protein] + UDP + H(+). The protein operates within protein modification; protein glycosylation. Functionally, catalyzes the initial reaction in O-linked oligosaccharide biosynthesis, the transfer of an N-acetyl-D-galactosamine residue to a serine or threonine residue on the protein receptor. Has a broad spectrum of substrates for peptides such as EA2, Muc5AC, Muc1a, Muc1b. Probably involved in O-linked glycosylation of the immunoglobulin A1 (IgA1) hinge region. Involved in O-linked glycosylation of APOC-III, ANGPTL3 and PLTP. It participates in the regulation of HDL-C metabolism. This Homo sapiens (Human) protein is Polypeptide N-acetylgalactosaminyltransferase 2 (GALNT2).